Reading from the N-terminus, the 362-residue chain is Adenosine kinase (362 aa).

Ala2 is subject to N-acetylalanine. The short motif at Pro8–Glu16 is the Nuclear localization signal element. An adenosine-binding site is contributed by Asp35. Ser49 contributes to the Mg(2+) binding site. Residue Tyr77 is modified to Phosphotyrosine. Mg(2+)-binding residues include Asp147 and Asn148. Adenosine is bound at residue Gln306. The active-site Proton acceptor is Asp317.

It belongs to the carbohydrate kinase PfkB family. As to quaternary structure, monomer. Mg(2+) serves as cofactor. In terms of tissue distribution, widely expressed. Highest level in placenta, liver, muscle and kidney.

It localises to the nucleus. The protein localises to the cytoplasm. The catalysed reaction is adenosine + ATP = AMP + ADP + H(+). It participates in purine metabolism; AMP biosynthesis via salvage pathway; AMP from adenosine: step 1/1. Its activity is regulated as follows. Activity is inhibited by 5-iodotubercidin and 5'-amino-5'-deoxyadenosine. Functionally, catalyzes the phosphorylation of the purine nucleoside adenosine at the 5' position in an ATP-dependent manner. Serves as a potential regulator of concentrations of extracellular adenosine and intracellular adenine nucleotides. This chain is Adenosine kinase, found in Homo sapiens (Human).